Here is a 473-residue protein sequence, read N- to C-terminus: Cytochrome c-552 (473 aa).

A signal peptide spans 1–33 (MQHGDEMMKKMTGKSFALSALVAASFMAAGAMA). Heme c is bound at residue histidine 93. Cysteine 121, cysteine 124, and lysine 125 together coordinate heme. 6 residues coordinate heme c: cysteine 159, cysteine 162, histidine 163, cysteine 201, cysteine 204, and histidine 205. 4 residues coordinate Ca(2+): glutamate 207, tyrosine 208, lysine 256, and glutamine 258. Substrate is bound at residue tyrosine 208. Residue histidine 259 participates in substrate binding. Residues histidine 270, cysteine 277, cysteine 280, histidine 281, histidine 296, cysteine 309, cysteine 312, histidine 313, and histidine 388 each contribute to the heme c site.

This sequence belongs to the cytochrome c-552 family. The cofactor is Ca(2+). Heme c is required as a cofactor.

The protein localises to the periplasm. It catalyses the reaction 6 Fe(III)-[cytochrome c] + NH4(+) + 2 H2O = 6 Fe(II)-[cytochrome c] + nitrite + 8 H(+). It participates in nitrogen metabolism; nitrate reduction (assimilation). Its function is as follows. Catalyzes the reduction of nitrite to ammonia, consuming six electrons in the process. In Shewanella sp. (strain ANA-3), this protein is Cytochrome c-552.